The chain runs to 326 residues: Phospho-N-acetylmuramoyl-pentapeptide-transferase (326 aa).

Helical transmembrane passes span 5–25 (GLLITIVVAFLITVLLSPIFI), 51–71 (TPTMGGLMIIFSIIITSLIMA), 82–102 (VWLLIFVLFGYGLLGFLDDFI), 122–142 (IIIALVFYFILRNQGFSTVIY), 148–168 (LQFDIGWFYAVLVIFMMVGAS), 180–200 (LLAGTAAIAFGAFAIIAWYGI), 204–224 (VVAVFSLAVVGALLGFLVFNA), 229–249 (VFMGDTGSLALGGAIAAISIL), 252–272 (LEILLIIIGGVFVIETLSVII), and 304–324 (VVTTFWLVGLLFAMLGVYIEV).

It belongs to the glycosyltransferase 4 family. MraY subfamily. Mg(2+) serves as cofactor.

The protein localises to the cell membrane. It catalyses the reaction UDP-N-acetyl-alpha-D-muramoyl-L-alanyl-gamma-D-glutamyl-meso-2,6-diaminopimeloyl-D-alanyl-D-alanine + di-trans,octa-cis-undecaprenyl phosphate = di-trans,octa-cis-undecaprenyl diphospho-N-acetyl-alpha-D-muramoyl-L-alanyl-D-glutamyl-meso-2,6-diaminopimeloyl-D-alanyl-D-alanine + UMP. The protein operates within cell wall biogenesis; peptidoglycan biosynthesis. Its function is as follows. Catalyzes the initial step of the lipid cycle reactions in the biosynthesis of the cell wall peptidoglycan: transfers peptidoglycan precursor phospho-MurNAc-pentapeptide from UDP-MurNAc-pentapeptide onto the lipid carrier undecaprenyl phosphate, yielding undecaprenyl-pyrophosphoryl-MurNAc-pentapeptide, known as lipid I. The sequence is that of Phospho-N-acetylmuramoyl-pentapeptide-transferase from Oceanobacillus iheyensis (strain DSM 14371 / CIP 107618 / JCM 11309 / KCTC 3954 / HTE831).